The primary structure comprises 376 residues: Homoserine dehydrogenase (376 aa).

NADP(+) contacts are provided by N17 and I18. I18 contacts NAD(+). Residues I18, K67, T99, and K123 each coordinate NADPH. Residues T99 and K123 each coordinate NADP(+). T99 lines the NAD(+) pocket. E150, V153, A155, and L157 together coordinate Na(+). S201 carries the phosphoserine modification. NADP(+)-binding residues include G213 and E216. L-homoserine-binding residues include E216 and D227. K231 acts as the Proton donor in catalysis. NADP(+) is bound at residue G349. G349 serves as a coordination point for NAD(+). G349 serves as a coordination point for NADPH.

The protein belongs to the homoserine dehydrogenase family. A metal cation serves as cofactor.

It carries out the reaction L-homoserine + NADP(+) = L-aspartate 4-semialdehyde + NADPH + H(+). It catalyses the reaction L-homoserine + NAD(+) = L-aspartate 4-semialdehyde + NADH + H(+). It functions in the pathway amino-acid biosynthesis; L-methionine biosynthesis via de novo pathway; L-homoserine from L-aspartate: step 3/3. The protein operates within amino-acid biosynthesis; L-threonine biosynthesis; L-threonine from L-aspartate: step 3/5. Functionally, catalyzes the conversion of L-aspartate-beta-semialdehyde (L-Asa) to L-homoserine (L-Hse), the third step in the biosynthesis of amino acids that derive from aspartate (the aspartate family of amino acids), including methioinine and threonine, the latter of which is a precursor to isoleucine; production of homoserine leads to a branch-point in the pathway as it can either be O-phosphorylated for processing to threonine, or O-acylated for processing to methionine. This Schizosaccharomyces pombe (strain 972 / ATCC 24843) (Fission yeast) protein is Homoserine dehydrogenase.